A 96-amino-acid polypeptide reads, in one-letter code: Protein Vpr (96 aa).

Residues 1 to 42 (MEQAPEDQGPQREPHNEWTLELLEELKNEAVRHFPRIWLHGL) are homooligomerization. Phosphoserine; by host is present on residues Ser-79, Ser-94, and Ser-96.

It belongs to the HIV-1 VPR protein family. Homooligomer, may form homodimer. Interacts with p6-gag region of the Pr55 Gag precursor protein through a (Leu-X-X)4 motif near the C-terminus of the P6gag protein. Interacts with host UNG. May interact with host RAD23A/HHR23A. Interacts with host VPRBP/DCAF1, leading to hijack the CUL4A-RBX1-DDB1-DCAF1/VPRBP complex, mediating ubiquitination of host proteins such as TERT and ZGPAT and arrest of the cell cycle in G2 phase. In terms of processing, phosphorylated on several residues by host. These phosphorylations regulate VPR activity for the nuclear import of the HIV-1 pre-integration complex.

It localises to the virion. The protein localises to the host nucleus. The protein resides in the host extracellular space. Functionally, during virus entry, plays a role in the transport of the viral pre-integration (PIC) complex to the host nucleus. This function is crucial for viral infection of non-dividing macrophages. May act directly at the nuclear pore complex, by binding nucleoporins phenylalanine-glycine (FG)-repeat regions. During virus replication, may deplete host UNG protein, and incude G2-M cell cycle arrest. Acts by targeting specific host proteins for degradation by the 26S proteasome, through association with the cellular CUL4A-DDB1 E3 ligase complex by direct interaction with host VPRPB/DCAF-1. Cell cycle arrest reportedly occurs within hours of infection and is not blocked by antiviral agents, suggesting that it is initiated by the VPR carried into the virion. Additionally, VPR induces apoptosis in a cell cycle dependent manner suggesting that these two effects are mechanistically linked. Detected in the serum and cerebrospinal fluid of AIDS patient, VPR may also induce cell death to bystander cells. This is Protein Vpr from Homo sapiens (Human).